Reading from the N-terminus, the 217-residue chain is 3,4-dihydroxy-2-butanone 4-phosphate synthase (217 aa).

Residues 37 to 38 (RE), Asp42, 150 to 154 (RGGHT), and Glu174 each bind D-ribulose 5-phosphate. Glu38 lines the Mg(2+) pocket. Position 153 (His153) interacts with Mg(2+).

Belongs to the DHBP synthase family. As to quaternary structure, homodimer. Mg(2+) is required as a cofactor. It depends on Mn(2+) as a cofactor.

The catalysed reaction is D-ribulose 5-phosphate = (2S)-2-hydroxy-3-oxobutyl phosphate + formate + H(+). Its pathway is cofactor biosynthesis; riboflavin biosynthesis; 2-hydroxy-3-oxobutyl phosphate from D-ribulose 5-phosphate: step 1/1. Functionally, catalyzes the conversion of D-ribulose 5-phosphate to formate and 3,4-dihydroxy-2-butanone 4-phosphate. The polypeptide is 3,4-dihydroxy-2-butanone 4-phosphate synthase (Pectobacterium atrosepticum (strain SCRI 1043 / ATCC BAA-672) (Erwinia carotovora subsp. atroseptica)).